The sequence spans 146 residues: D-aminoacyl-tRNA deacylase (146 aa).

Positions 137 to 138 match the Gly-cisPro motif, important for rejection of L-amino acids motif; it reads GP.

The protein belongs to the DTD family. In terms of assembly, homodimer.

The protein resides in the cytoplasm. The enzyme catalyses glycyl-tRNA(Ala) + H2O = tRNA(Ala) + glycine + H(+). The catalysed reaction is a D-aminoacyl-tRNA + H2O = a tRNA + a D-alpha-amino acid + H(+). An aminoacyl-tRNA editing enzyme that deacylates mischarged D-aminoacyl-tRNAs. Also deacylates mischarged glycyl-tRNA(Ala), protecting cells against glycine mischarging by AlaRS. Acts via tRNA-based rather than protein-based catalysis; rejects L-amino acids rather than detecting D-amino acids in the active site. By recycling D-aminoacyl-tRNA to D-amino acids and free tRNA molecules, this enzyme counteracts the toxicity associated with the formation of D-aminoacyl-tRNA entities in vivo and helps enforce protein L-homochirality. The sequence is that of D-aminoacyl-tRNA deacylase from Bacillus cytotoxicus (strain DSM 22905 / CIP 110041 / 391-98 / NVH 391-98).